A 339-amino-acid polypeptide reads, in one-letter code: MSDALKPLIGAAADRPLTRAEAEQAFTILFDGEATPSQIGGLLMALRTRGETVDEYAAAAAVMRAKCNAVRAPEGAMDIVGTGGDGKNTLNISTATAFVVAGAGVVVAKHGNRNLSSKSGTADLQGQMGINVMVGPQVVEKALNEAGIGFMMAPMHHPATAHVMPTRAELGTRTIFNILGPLTNPAGVKRQLTGAFTRALIRPMAETLGLLGSERAWLVHGSDGTDELTITGVSWVAALEDGTVKEVELHPEDAGLPVHPFEAIIGGTPEENATAFRALLDGAPSAYRDAVLLNAAAALVVADRAADLREGVALAAQSIDSGQARAKVEALSRITQDAR.

5-phospho-alpha-D-ribose 1-diphosphate is bound by residues Gly-81, 84–85 (GD), Thr-89, 91–94 (NIST), 109–117 (KHGNRNLSS), and Thr-121. An anthranilate-binding site is contributed by Gly-81. Ser-93 serves as a coordination point for Mg(2+). An anthranilate-binding site is contributed by Asn-112. Arg-167 contacts anthranilate. The Mg(2+) site is built by Asp-226 and Glu-227.

The protein belongs to the anthranilate phosphoribosyltransferase family. As to quaternary structure, homodimer. The cofactor is Mg(2+).

It catalyses the reaction N-(5-phospho-beta-D-ribosyl)anthranilate + diphosphate = 5-phospho-alpha-D-ribose 1-diphosphate + anthranilate. Its pathway is amino-acid biosynthesis; L-tryptophan biosynthesis; L-tryptophan from chorismate: step 2/5. Catalyzes the transfer of the phosphoribosyl group of 5-phosphorylribose-1-pyrophosphate (PRPP) to anthranilate to yield N-(5'-phosphoribosyl)-anthranilate (PRA). The chain is Anthranilate phosphoribosyltransferase from Ruegeria pomeroyi (strain ATCC 700808 / DSM 15171 / DSS-3) (Silicibacter pomeroyi).